The primary structure comprises 181 residues: Transcriptional repressor NrdR (181 aa).

A zinc finger spans residues 3–34; the sequence is CPYCQHTDSRVLESRSTGAGRSIRRRRECLSC. Residues 49 to 139 enclose the ATP-cone domain; sequence ISVIKRNGQS…VYRQFQGVDD (91 aa).

The protein belongs to the NrdR family. Zn(2+) is required as a cofactor.

Negatively regulates transcription of bacterial ribonucleotide reductase nrd genes and operons by binding to NrdR-boxes. This chain is Transcriptional repressor NrdR, found in Picosynechococcus sp. (strain ATCC 27264 / PCC 7002 / PR-6) (Agmenellum quadruplicatum).